A 467-amino-acid chain; its full sequence is MTDAKQTSPRRRRSWAEPYKIKVVEPLKITTRAEREQAIAQAGYNTFLLRSEDVYIDLLTDSGTSAMSDYQWAGMMLGDEAYAGSKNFYNLEASIQKYYGYRHIVPTHQGRGAENILSQILIKPGDYIPGNMYFTTTRLHQELAGGTFVDVIIDEAHDAQSLHPFKGNVDLQKLTDLIERVGAERIPYISVAGTVNMAGGQPISMANLRAVHQLAQTYGIRIILDATRAVENAHFIQQREEDYSSQAIATILREFCSYTDGCTMSGKKDALVNIGGWLALNDYNLYEEARNLIVIYEGLHTYGGMAGRDMEAMARGIEESVQDDHIRARVGQVEYLGQKLLDWGIPIVVPIGGHAIYLDAKRFLPQIPQDQFPAQRLAAELYLEAGIRAMERGIVSAGRNKETGDNYYPELELVRLTIPRRVYTQAHMDLTAEAVEEVYHNRDRLRGLKMIYEPKYLRFFQARFELQ.

Lys-268 is subject to N6-(pyridoxal phosphate)lysine.

The protein belongs to the beta-eliminating lyase family. As to quaternary structure, homotetramer. The cofactor is pyridoxal 5'-phosphate.

It catalyses the reaction L-tyrosine + H2O = phenol + pyruvate + NH4(+). The chain is Tyrosine phenol-lyase from Nostoc punctiforme (strain ATCC 29133 / PCC 73102).